Reading from the N-terminus, the 228-residue chain is UPF0758 protein STER_1430 (228 aa).

The MPN domain occupies Gln103–Asp225. Zn(2+)-binding residues include His174, His176, and Asp187. The short motif at His174–Asp187 is the JAMM motif element.

This sequence belongs to the UPF0758 family.

The polypeptide is UPF0758 protein STER_1430 (Streptococcus thermophilus (strain ATCC BAA-491 / LMD-9)).